The primary structure comprises 283 residues: Phosphatidylglycerol--prolipoprotein diacylglyceryl transferase (283 aa).

Helical transmembrane passes span 17–37 (LAVR…TFLG), 56–76 (FLTW…VLFY), and 92–112 (WEGG…IWLF). An a 1,2-diacyl-sn-glycero-3-phospho-(1'-sn-glycerol)-binding site is contributed by Arg-139. Helical transmembrane passes span 222–242 (GQTA…AEFA) and 255–275 (GLSM…VGFV).

It belongs to the Lgt family.

The protein localises to the cell inner membrane. The enzyme catalyses L-cysteinyl-[prolipoprotein] + a 1,2-diacyl-sn-glycero-3-phospho-(1'-sn-glycerol) = an S-1,2-diacyl-sn-glyceryl-L-cysteinyl-[prolipoprotein] + sn-glycerol 1-phosphate + H(+). It functions in the pathway protein modification; lipoprotein biosynthesis (diacylglyceryl transfer). Functionally, catalyzes the transfer of the diacylglyceryl group from phosphatidylglycerol to the sulfhydryl group of the N-terminal cysteine of a prolipoprotein, the first step in the formation of mature lipoproteins. This chain is Phosphatidylglycerol--prolipoprotein diacylglyceryl transferase, found in Neisseria gonorrhoeae (strain ATCC 700825 / FA 1090).